A 147-amino-acid polypeptide reads, in one-letter code: Hemoglobin subunit beta (147 aa).

Residues 3 to 147 (HWTAEEKQLI…VAHALARKYH (145 aa)) form the Globin domain. Residues His64 and His93 each coordinate heme b.

This sequence belongs to the globin family. As to quaternary structure, heterotetramer of two alpha chains and two beta chains. Red blood cells.

In terms of biological role, involved in oxygen transport from the lung to the various peripheral tissues. The protein is Hemoglobin subunit beta (HBB) of Anas platyrhynchos (Mallard).